The sequence spans 864 residues: N-alpha-acetyltransferase 16, NatA auxiliary subunit (864 aa).

TPR repeat units lie at residues glycine 46 to serine 79, histidine 80 to asparagine 113, arginine 148 to lysine 184, leucine 224 to asparagine 257, leucine 374 to leucine 407, glutamate 409 to aspartate 441, and methionine 485 to isoleucine 518. The interval glutamine 603–leucine 638 is disordered. A compositionally biased stretch (basic and acidic residues) spans alanine 606–glutamine 621.

In terms of assembly, component of the N-terminal acetyltransferase A (NatA) complex composed of NAA10 and NAA16.

Its function is as follows. Auxillary subunit of the N-terminal acetyltransferase A (NatA) complex which displays alpha (N-terminal) acetyltransferase activity. The sequence is that of N-alpha-acetyltransferase 16, NatA auxiliary subunit (NAA16) from Homo sapiens (Human).